Reading from the N-terminus, the 469-residue chain is Alpha-2C adrenergic receptor (469 aa).

The segment at 1 to 29 (MDLQLTTNSTDSGDRGGSSNESLQRQPPS) is disordered. Residues 1–36 (MDLQLTTNSTDSGDRGGSSNESLQRQPPSQYSPAEV) are Extracellular-facing. N-linked (GlcNAc...) asparagine glycans are attached at residues Asn8 and Asn20. A helical transmembrane segment spans residues 37 to 62 (AGLAAVVSFLIVFTIVGNVLVVIAVL). Over 63 to 73 (TSRALKAPQNL) the chain is Cytoplasmic. The helical transmembrane segment at 74-99 (FQVSLASADILVATLVMPFSLANELM) threads the bilayer. Topologically, residues 100–109 (NYWYFGKVWC) are extracellular. A disulfide bond links Cys109 and Cys187. A helical membrane pass occupies residues 110-132 (VIYLALDVLFCTSSIVHLCAISL). The Cytoplasmic segment spans residues 133–154 (DRYWSVTQAVEYNLKRTPRRIK). A helical transmembrane segment spans residues 155–175 (GIIVTVWLISAVISFPPLISL). The Extracellular segment spans residues 176 to 194 (YRDPEDDLYPQCELNDETW). A helical transmembrane segment spans residues 195-216 (YILSSCIGSFFAPCIIMVLVYV). Residues 217–386 (RIYRVAKLRT…RKVTQAREKR (170 aa)) lie on the Cytoplasmic side of the membrane. 2 disordered regions span residues 232–261 (KRTV…AAAA) and 279–353 (HHHH…SRLS). A compositionally biased stretch (basic residues) spans 279-296 (HHHHHLHHHHHHHHHQLR). A compositionally biased stretch (acidic residues) spans 301 to 310 (LEDIELEESS). Residues 331–353 (RGFSFSFSSTKGGQSAGAGSRLS) show a composition bias toward low complexity. Residues 387 to 407 (FTFVLAVVMGVFVVCWFPFFF) form a helical membrane-spanning segment. Residues 408 to 427 (TYSLYGICREACQVPETLFK) lie on the Extracellular side of the membrane. A helical transmembrane segment spans residues 428–448 (FFFWIGYCNSSLNPVIYTIFN). The Cytoplasmic segment spans residues 449 to 469 (QDFRRSFKHILFKKKKKTSLQ).

The protein belongs to the G-protein coupled receptor 1 family. Adrenergic receptor subfamily. ADRA2C sub-subfamily.

It localises to the cell membrane. Its function is as follows. Alpha-2 adrenergic receptors mediate the catecholamine-induced inhibition of adenylate cyclase through the action of G proteins. This is Alpha-2C adrenergic receptor (ADRA2C) from Didelphis virginiana (North American opossum).